Reading from the N-terminus, the 430-residue chain is Trigger factor (430 aa).

A PPIase FKBP-type domain is found at 163–248 (GDVVDVDYKG…LNSIKTSILP (86 aa)).

It belongs to the FKBP-type PPIase family. Tig subfamily.

The protein localises to the cytoplasm. The catalysed reaction is [protein]-peptidylproline (omega=180) = [protein]-peptidylproline (omega=0). Functionally, involved in protein export. Acts as a chaperone by maintaining the newly synthesized protein in an open conformation. Functions as a peptidyl-prolyl cis-trans isomerase. This Lawsonia intracellularis (strain PHE/MN1-00) protein is Trigger factor.